We begin with the raw amino-acid sequence, 475 residues long: 3-isopropylmalate dehydratase large subunit (475 aa).

Cysteine 352, cysteine 412, and cysteine 415 together coordinate [4Fe-4S] cluster.

This sequence belongs to the aconitase/IPM isomerase family. LeuC type 1 subfamily. As to quaternary structure, heterodimer of LeuC and LeuD. It depends on [4Fe-4S] cluster as a cofactor.

It catalyses the reaction (2R,3S)-3-isopropylmalate = (2S)-2-isopropylmalate. The protein operates within amino-acid biosynthesis; L-leucine biosynthesis; L-leucine from 3-methyl-2-oxobutanoate: step 2/4. Catalyzes the isomerization between 2-isopropylmalate and 3-isopropylmalate, via the formation of 2-isopropylmaleate. The chain is 3-isopropylmalate dehydratase large subunit from Gluconobacter oxydans (strain 621H) (Gluconobacter suboxydans).